The primary structure comprises 214 residues: Hypoxanthine-guanine phosphoribosyltransferase (214 aa).

At Ala2 the chain carries N-acetylalanine. Lys69 lines the GMP pocket. The residue at position 103 (Lys103) is an N6-acetyllysine. Lys115 participates in a covalent cross-link: Glycyl lysine isopeptide (Lys-Gly) (interchain with G-Cter in SUMO1); alternate. Residue Lys115 forms a Glycyl lysine isopeptide (Lys-Gly) (interchain with G-Cter in SUMO2); alternate linkage. GMP contacts are provided by residues 134–142 (EDIIDTGKT), Lys166, 186–188 (KFV), and Asp194. Residue Asp138 is the Proton acceptor of the active site. Thr142 bears the Phosphothreonine mark. Residue Asp194 participates in Mg(2+) binding.

Belongs to the purine/pyrimidine phosphoribosyltransferase family. In terms of assembly, homotetramer. The cofactor is Mg(2+).

The protein localises to the cytoplasm. The catalysed reaction is IMP + diphosphate = hypoxanthine + 5-phospho-alpha-D-ribose 1-diphosphate. It catalyses the reaction GMP + diphosphate = guanine + 5-phospho-alpha-D-ribose 1-diphosphate. It participates in purine metabolism; IMP biosynthesis via salvage pathway; IMP from hypoxanthine: step 1/1. Functionally, converts guanine to guanosine monophosphate, and hypoxanthine to inosine monophosphate. Transfers the 5-phosphoribosyl group from 5-phosphoribosylpyrophosphate onto the purine. Plays a central role in the generation of purine nucleotides through the purine salvage pathway. In Mus spretus (Western Mediterranean mouse), this protein is Hypoxanthine-guanine phosphoribosyltransferase (Hprt1).